A 69-amino-acid polypeptide reads, in one-letter code: Large ribosomal subunit protein uL29 (69 aa).

The protein belongs to the universal ribosomal protein uL29 family.

The chain is Large ribosomal subunit protein uL29 from Rhodospirillum centenum (strain ATCC 51521 / SW).